Here is a 641-residue protein sequence, read N- to C-terminus: Epsin-2 (641 aa).

Residues arginine 8, lysine 11, arginine 25, asparagine 30, arginine 63, and histidine 73 each contribute to the a 1,2-diacyl-sn-glycero-3-phospho-(1D-myo-inositol-4,5-bisphosphate) site. Residues 12-144 form the ENTH domain; the sequence is NIVNNYSEAE…KDEERLKAER (133 aa). Phosphoserine is present on residues arginine 153 and glutamine 156. Positions 163–181 are enriched in polar residues; it reads SNQITFGRGSSQPNLSTSH. Disordered stretches follow at residues 163–214 and 255–275; these read SNQI…GAPL and RATS…TSGE. Arginine 170 bears the Omega-N-methylarginine mark. A phosphoserine mark is found at serine 173, serine 192, and serine 195. Positions 259-273 are enriched in polar residues; that stretch reads PRVSSELEQARPQTS. UIM domains lie at 275 to 294 and 300 to 319; these read EEEL…AEQE and GDDL…TVKI. The segment at 340 to 425 is disordered; the sequence is ALPSSGPAAQ…QPASSAGKRA (86 aa). 6 repeat units span residues 352–354, 364–366, 377–379, 391–393, 409–411, and 427–429. Positions 352 to 639 are 6 X 3 AA repeats of [DE]-P-W; it reads EPWGPSASTN…AQATGTTNPF (288 aa). Residues 408–421 are compositionally biased toward low complexity; the sequence is SDPWAASQQPASSA. Residues 470-512 form a disordered region; that stretch reads TAESVTSLPSQNNGTTSPDPFESQPLTVASSKPSSARKTPESF. Residues 472–506 are compositionally biased toward polar residues; that stretch reads ESVTSLPSQNNGTTSPDPFESQPLTVASSKPSSAR. Phosphoserine is present on serine 486. Threonine 508 bears the Phosphothreonine mark. 2 consecutive repeat copies span residues 537–539 and 552–554. Positions 537–639 are 3 X 3 AA repeats of N-P-F; the sequence is NPFLAPGAPA…AQATGTTNPF (103 aa). Serine 570 is subject to Phosphoserine. Copy 3 of the repeat occupies 637–639; sequence NPF.

The protein belongs to the epsin family. As to quaternary structure, binds EPS15. Interacts with ITSN1. Binds AP-2 and clathrin. Interacts with UBQLN2. Ubiquitinated. Highest expression is found in brain. Detected at lower levels in lung and liver.

It localises to the cytoplasm. The protein localises to the cytoplasmic vesicle. Its subcellular location is the clathrin-coated vesicle. Plays a role in the formation of clathrin-coated invaginations and endocytosis. In Homo sapiens (Human), this protein is Epsin-2 (EPN2).